A 42-amino-acid polypeptide reads, in one-letter code: Photosystem I reaction center subunit IX (42 aa).

Residues 8–28 (YLSTAPVLLTIWLSFTAALVI) traverse the membrane as a helical segment.

The protein belongs to the PsaJ family.

The protein resides in the plastid. It is found in the chloroplast thylakoid membrane. In terms of biological role, may help in the organization of the PsaE and PsaF subunits. The protein is Photosystem I reaction center subunit IX of Guillardia theta (Cryptophyte).